The chain runs to 152 residues: Superoxide dismutase [Cu-Zn] (152 aa).

3 residues coordinate Cu cation: His45, His47, and His62. Cys56 and Cys145 form a disulfide bridge. 4 residues coordinate Zn(2+): His62, His70, His79, and Asp82. His119 serves as a coordination point for Cu cation.

Belongs to the Cu-Zn superoxide dismutase family. As to quaternary structure, homodimer. The cofactor is Cu cation. It depends on Zn(2+) as a cofactor.

It localises to the cytoplasm. It carries out the reaction 2 superoxide + 2 H(+) = H2O2 + O2. Destroys radicals which are normally produced within the cells and which are toxic to biological systems. This is Superoxide dismutase [Cu-Zn] (SODCC) from Ipomoea batatas (Sweet potato).